The sequence spans 198 residues: Transcription factor elt-7 (198 aa).

Positions 1–18 (MLPETTTLQPLPSVTTIM) are enriched in polar residues. The segment at 1–20 (MLPETTTLQPLPSVTTIMNE) is disordered. A GATA-type zinc finger spans residues 143–167 (CSHCSTTTTTLWRKNDEGNLECNAC).

It is found in the nucleus. Its function is as follows. Transcriptional activator that binds to the consensus sequence 5'-[AT]GATA[AG]-3'. Required for gut-specific differentiation, specifically acting with the GATA region-binding transcription factor elt-2 to control normal gene expression and promote normal formation of the intestine. May have a protective role in response to infection by Gram-negative bacteria such as P.aeruginosa. This chain is Transcription factor elt-7, found in Caenorhabditis elegans.